The following is a 274-amino-acid chain: Nitrogenase iron protein (274 aa).

Position 8–15 (8–15 (GKGGIGKS)) interacts with ATP. Cys-94 lines the [4Fe-4S] cluster pocket. At Arg-97 the chain carries ADP-ribosylarginine; by dinitrogenase reductase ADP-ribosyltransferase. Cys-131 provides a ligand contact to [4Fe-4S] cluster.

It belongs to the NifH/BchL/ChlL family. Homodimer. The cofactor is [4Fe-4S] cluster. Post-translationally, the reversible ADP-ribosylation of Arg-97 inactivates the nitrogenase reductase and regulates nitrogenase activity.

It carries out the reaction N2 + 8 reduced [2Fe-2S]-[ferredoxin] + 16 ATP + 16 H2O = H2 + 8 oxidized [2Fe-2S]-[ferredoxin] + 2 NH4(+) + 16 ADP + 16 phosphate + 6 H(+). Its function is as follows. The key enzymatic reactions in nitrogen fixation are catalyzed by the nitrogenase complex, which has 2 components: the iron protein and the molybdenum-iron protein. In Azobacteroides pseudotrichonymphae genomovar. CFP2, this protein is Nitrogenase iron protein.